A 372-amino-acid chain; its full sequence is Flap endonuclease 1 (372 aa).

The N-domain stretch occupies residues 1-105 (MGVKGLNQLI…GELEKRLLRR (105 aa)). D34 lines the Mg(2+) pocket. DNA contacts are provided by R47 and R71. Residues D87, E159, E161, D180, and D182 each contribute to the Mg(2+) site. Positions 123 to 254 (EVLKFEKRLV…ATAFKLIKEH (132 aa)) are I-domain. E159 lines the DNA pocket. G232 and D234 together coordinate DNA. D234 provides a ligand contact to Mg(2+). The segment at 339–347 (VQGRLDGFF) is interaction with PCNA. Basic and acidic residues predominate over residues 353-366 (DDKKRKADPKESKA). A disordered region spans residues 353–372 (DDKKRKADPKESKASKKKKK).

This sequence belongs to the XPG/RAD2 endonuclease family. FEN1 subfamily. Interacts with PCNA. Three molecules of RAD27 bind to one PCNA trimer with each molecule binding to one PCNA monomer. PCNA stimulates the nuclease activity without altering cleavage specificity. Mg(2+) serves as cofactor. In terms of processing, phosphorylated. Phosphorylation upon DNA damage induces relocalization to the nuclear plasma.

It is found in the nucleus. Its subcellular location is the nucleolus. It localises to the nucleoplasm. The protein resides in the mitochondrion. Functionally, structure-specific nuclease with 5'-flap endonuclease and 5'-3' exonuclease activities involved in DNA replication and repair. During DNA replication, cleaves the 5'-overhanging flap structure that is generated by displacement synthesis when DNA polymerase encounters the 5'-end of a downstream Okazaki fragment. It enters the flap from the 5'-end and then tracks to cleave the flap base, leaving a nick for ligation. Also involved in the long patch base excision repair (LP-BER) pathway, by cleaving within the apurinic/apyrimidinic (AP) site-terminated flap. Acts as a genome stabilization factor that prevents flaps from equilibrating into structures that lead to duplications and deletions. Also possesses 5'-3' exonuclease activity on nicked or gapped double-stranded DNA, and exhibits RNase H activity. Also involved in replication and repair of rDNA and in repairing mitochondrial DNA. The polypeptide is Flap endonuclease 1 (Candida albicans (strain WO-1) (Yeast)).